The following is a 288-amino-acid chain: Nucleotide-binding protein Neut_1559 (288 aa).

8-15 (GLSGSGKS) contributes to the ATP binding site. Position 57–60 (57–60 (DMRS)) interacts with GTP.

The protein belongs to the RapZ-like family.

Displays ATPase and GTPase activities. This chain is Nucleotide-binding protein Neut_1559, found in Nitrosomonas eutropha (strain DSM 101675 / C91 / Nm57).